A 167-amino-acid chain; its full sequence is U-scoloptoxin(08)-Er5b (167 aa).

A signal peptide spans 1-22 (MKTNCEFPLLCLLIVLVANVEG). Positions 23-94 (EVEDTGLKMV…KRLWRNWERR (72 aa)) are excised as a propeptide. RLWRNWE repeat units lie at residues 34–40 (RLWRNWE), 61–67 (RLWRNWE), and 86–92 (RLWRNWE). Glutamine 95 carries the post-translational modification Pyrrolidone carboxylic acid. The stretch at 107 to 113 (ELWRNWE) is one RLWRNWE 4; approximate repeat. Residues 112–118 (WEDLKRR) constitute a propeptide that is removed on maturation. The residue at position 119 (glutamine 119) is a Pyrrolidone carboxylic acid. An RLWRNWE 5 repeat occupies 134–140 (RLWRNWE). Residues 139-167 (WEDNHATLRKRSADSLSRQKRLGKERGKE) constitute a propeptide that is removed on maturation. The interval 147–167 (RKRSADSLSRQKRLGKERGKE) is disordered.

Belongs to the scoloptoxin-08 family. In terms of tissue distribution, expressed by the venom gland.

It is found in the secreted. This is U-scoloptoxin(08)-Er5b from Ethmostigmus rubripes (Giant centipede).